Reading from the N-terminus, the 288-residue chain is tRNA (guanine-N(1)-)-methyltransferase (288 aa).

The disordered stretch occupies residues 82 to 105 (ATDAVDTSDPGDSAAPDSSAPSGA). Low complexity predominate over residues 89–105 (SDPGDSAAPDSSAPSGA). Residues Gly137 and 162 to 167 (IGDYVL) each bind S-adenosyl-L-methionine.

Belongs to the RNA methyltransferase TrmD family. In terms of assembly, homodimer.

It localises to the cytoplasm. It carries out the reaction guanosine(37) in tRNA + S-adenosyl-L-methionine = N(1)-methylguanosine(37) in tRNA + S-adenosyl-L-homocysteine + H(+). Functionally, specifically methylates guanosine-37 in various tRNAs. In Bifidobacterium longum (strain DJO10A), this protein is tRNA (guanine-N(1)-)-methyltransferase.